The primary structure comprises 493 residues: Putative lon protease homolog (493 aa).

An ATP-binding site is contributed by 52 to 59; sequence GPPGVGKS.

The protein belongs to the peptidase S16 family.

The protein is Putative lon protease homolog of Thermoplasma acidophilum (strain ATCC 25905 / DSM 1728 / JCM 9062 / NBRC 15155 / AMRC-C165).